A 485-amino-acid polypeptide reads, in one-letter code: Fumarate hydratase, mitochondrial (485 aa).

The transit peptide at 1 to 19 directs the protein to the mitochondrion; it reads MLSASRKLNNQQFLKTIRN. Substrate-binding positions include 118-120, 150-153, 160-162, and T208; these read SGT, HPND, and SSN. The Proton donor/acceptor role is filled by H209. S339 is a catalytic residue. Substrate-binding positions include S340 and 345 to 347; that span reads KVN.

This sequence belongs to the class-II fumarase/aspartase family. Fumarase subfamily. As to quaternary structure, homotetramer.

Its subcellular location is the mitochondrion. It localises to the cytoplasm. It catalyses the reaction (S)-malate = fumarate + H2O. The protein operates within carbohydrate metabolism; tricarboxylic acid cycle; (S)-malate from fumarate: step 1/1. Functionally, catalyzes the reversible stereospecific interconversion of fumarate to L-malate. In terms of biological role, catalyzes the hydration of fumarate to L-malate in the tricarboxylic acid (TCA) cycle to facilitate a transition step in the production of energy in the form of NADH. This chain is Fumarate hydratase, mitochondrial, found in Dictyostelium discoideum (Social amoeba).